A 507-amino-acid polypeptide reads, in one-letter code: Microcystinase C (507 aa).

Residues 1 to 21 (MLDRRTLMGGILSMAGSKATG) form the signal peptide. The Zn(2+) site is built by aspartate 167, histidine 169, and histidine 191.

Belongs to the peptidase M81 family. Zn(2+) serves as cofactor.

With respect to regulation, inhibited by the metal chelators EDTA and 1,10-phenanthroline. Involved in peptidolytic degradation of cyclic heptapeptide hepatotoxin microcystin (MC). Cleaves both linear MC and the tetrapeptide degradation product of MC. Cleaves the Adda-Glu peptide bond of linear MC heptapeptides. The polypeptide is Microcystinase C (Sphingomonas sp).